A 142-amino-acid chain; its full sequence is Snaclec GPIB-binding protein subunit alpha (142 aa).

Cystine bridges form between C6/C17, C39/C136, and C111/C128. One can recognise a C-type lectin domain in the interval 13 to 137 (HRQYCYKFFQ…CVEGNPFVCK (125 aa)).

Belongs to the snaclec family. In terms of assembly, heterodimer of subunits alpha and beta; disulfide-linked. Expressed by the venom gland.

Its subcellular location is the secreted. Its function is as follows. Binds to platelet GPIb (subunit alpha) (GP1BA) and functions as a receptor blocker for vWF binding to GPIb. The platelet GPIb-binding site resides on the GPIB-BP subunit beta and not on the alpha subunit. At a final concentration of 104 nM totally abolishes vWF-dependent shear-induced platelet aggregation (SIPA) at a high shear stress, but had no effect on SIPA at a low shear stress. The protein is Snaclec GPIB-binding protein subunit alpha of Bothrops jararaca (Jararaca).